Here is a 261-residue protein sequence, read N- to C-terminus: Carnitinyl-CoA dehydratase (261 aa).

Glu-111 (nucleophile) is an active-site residue. The Proton acceptor role is filled by Glu-131.

This sequence belongs to the enoyl-CoA hydratase/isomerase family.

It carries out the reaction (R)-carnitinyl-CoA = crotonobetainyl-CoA + H2O. It participates in amine and polyamine metabolism; carnitine metabolism. Catalyzes the reversible dehydration of L-carnitinyl-CoA to crotonobetainyl-CoA. In Salmonella arizonae (strain ATCC BAA-731 / CDC346-86 / RSK2980), this protein is Carnitinyl-CoA dehydratase.